A 277-amino-acid polypeptide reads, in one-letter code: Alpha carbonic anhydrase 3 (277 aa).

An N-terminal signal peptide occupies residues methionine 1–alanine 19. One can recognise an Alpha-carbonic anhydrase domain in the interval threonine 24–glutamate 259. A disulfide bridge links cysteine 49 with cysteine 209. N-linked (GlcNAc...) asparagine glycosylation is found at asparagine 70 and asparagine 107. Residues histidine 117, histidine 119, and histidine 136 each contribute to the Zn(2+) site. Threonine 205 to threonine 206 contributes to the substrate binding site. The segment at leucine 257 to valine 277 is disordered.

It belongs to the alpha-class carbonic anhydrase family. Zn(2+) is required as a cofactor. N-glycosylated. Expressed in flowers and siliques.

It is found in the plastid. The protein resides in the chloroplast stroma. The enzyme catalyses hydrogencarbonate + H(+) = CO2 + H2O. Functionally, reversible hydration of carbon dioxide. The polypeptide is Alpha carbonic anhydrase 3 (ACA3) (Arabidopsis thaliana (Mouse-ear cress)).